A 592-amino-acid polypeptide reads, in one-letter code: Outer spore wall assembly protein SHE10 (592 aa).

The N-terminal stretch at 1–23 (MRFFKRFLLTLTVFIYTLRYLHC) is a signal peptide. Coiled-coil stretches lie at residues 354 to 385 (ENNI…LYEE) and 448 to 583 (LNQF…KQMG). Positions 507-580 (QSEQEERIKS…EVRKQEEARK (74 aa)) are enriched in basic and acidic residues. The disordered stretch occupies residues 507–592 (QSEQEERIKS…GSPPPPQQQQ (86 aa)).

The protein belongs to the SHE10 family. As to quaternary structure, component of the mitochondria-localized RNase mitochondrial RNA-processing (RNase MRP) composed of one single RNA encoded by the NME1 gene and at least 31 proteins. Absent in the nucleus-localized RNase MRP (NuMRP).

The protein localises to the mitochondrion. Functionally, involved in spore wall assembly. May be a component of the mitochondrial RNase MRP (MtMRP), a ribonucleoprotein endoribonuclease involved in the cleaving RNA transcripts to generate primers for DNA replication in mitochondria. This chain is Outer spore wall assembly protein SHE10, found in Vanderwaltozyma polyspora (strain ATCC 22028 / DSM 70294 / BCRC 21397 / CBS 2163 / NBRC 10782 / NRRL Y-8283 / UCD 57-17) (Kluyveromyces polysporus).